A 282-amino-acid chain; its full sequence is MAWFKRDNPPQAKGPAHRVKVPEGLWTKCVSCGETIYTKDIENNLNVCPKCNHHYRVSSKKRLELLLDEGSFTEFDAGVVSVDFLEFKDSKSYQDRIDQALAKGGSKDAIICGSGRIEGTPVQICVFDFSFMGGSMGSVVGEKITRGIERALSDRTPCIIVSASGGARMQESILSLMQMAKTSAALAKLREAGLPFVSILTDPTTGGVTASFAMLGDINMAEPKALIGFAGPRVIEQTIRQKLPQGFQRSEYLLDHGMVDVIVERSKMKSQLSSILTMLYRP.

Positions 25 to 282 (LWTKCVSCGE…SSILTMLYRP (258 aa)) constitute a CoA carboxyltransferase N-terminal domain. Zn(2+) is bound by residues Cys29, Cys32, Cys48, and Cys51. The segment at 29 to 51 (CVSCGETIYTKDIENNLNVCPKC) adopts a C4-type zinc-finger fold.

The protein belongs to the AccD/PCCB family. In terms of assembly, acetyl-CoA carboxylase is a heterohexamer composed of biotin carboxyl carrier protein (AccB), biotin carboxylase (AccC) and two subunits each of ACCase subunit alpha (AccA) and ACCase subunit beta (AccD). Requires Zn(2+) as cofactor.

It is found in the cytoplasm. The enzyme catalyses N(6)-carboxybiotinyl-L-lysyl-[protein] + acetyl-CoA = N(6)-biotinyl-L-lysyl-[protein] + malonyl-CoA. The protein operates within lipid metabolism; malonyl-CoA biosynthesis; malonyl-CoA from acetyl-CoA: step 1/1. Functionally, component of the acetyl coenzyme A carboxylase (ACC) complex. Biotin carboxylase (BC) catalyzes the carboxylation of biotin on its carrier protein (BCCP) and then the CO(2) group is transferred by the transcarboxylase to acetyl-CoA to form malonyl-CoA. This Citrifermentans bemidjiense (strain ATCC BAA-1014 / DSM 16622 / JCM 12645 / Bem) (Geobacter bemidjiensis) protein is Acetyl-coenzyme A carboxylase carboxyl transferase subunit beta.